A 263-amino-acid chain; its full sequence is Undecaprenyl-diphosphatase 2 (263 aa).

The next 8 helical transmembrane spans lie at 15 to 37 (GLTEFLPVSSTGHMILTGHLLGF), 42 to 62 (AKVFEVVIQLGSILAVVVIFW), 83 to 103 (LHIIIGMIPAGVLGVLFHSAI), 106 to 126 (VLFGPGPVVISLVAGGILMIV), 142 to 162 (ITYKQAFTIGMFQCLALWPGF), 183 to 203 (AEYTFILAVPMMVAASGLDLI), 216 to 236 (LFATGFITAFVVAMLAIVSFL), and 242 to 262 (VKLTPFAYYRFILAAVFYFFI).

The protein belongs to the UppP family.

Its subcellular location is the cell membrane. It carries out the reaction di-trans,octa-cis-undecaprenyl diphosphate + H2O = di-trans,octa-cis-undecaprenyl phosphate + phosphate + H(+). Catalyzes the dephosphorylation of undecaprenyl diphosphate (UPP). Confers resistance to bacitracin. This is Undecaprenyl-diphosphatase 2 from Bacillus cereus (strain ATCC 10987 / NRS 248).